A 457-amino-acid polypeptide reads, in one-letter code: Protein translocase subunit SecY (457 aa).

The next 10 membrane-spanning stretches (helical) occupy residues 17-37 (IFFTFSLLALCRIGVFIPVPG), 75-95 (IALGVVPYISASIIVQLLVVF), 118-138 (TRLFTLVLACVQSLLFAKFAL), 162-182 (WVFYLTTVVVMITGTLLLMWV), 195-215 (ISLIITLGILASFPSVLGSIF), 230-250 (IVSLLILCAVFVFVLMATVLI), 287-307 (VIPVIFASSLLMFPATIGQFL), 326-346 (VAYSIFYVLLIIFFTYFWTAT), 386-406 (LLGAVFLAVVAILPSILGRIL), and 412-432 (VSYFLGGTAMLIVVGVILDTM).

Belongs to the SecY/SEC61-alpha family. As to quaternary structure, component of the Sec protein translocase complex. Heterotrimer consisting of SecY, SecE and SecG subunits. The heterotrimers can form oligomers, although 1 heterotrimer is thought to be able to translocate proteins. Interacts with the ribosome. Interacts with SecDF, and other proteins may be involved. Interacts with SecA.

It localises to the cell inner membrane. Functionally, the central subunit of the protein translocation channel SecYEG. Consists of two halves formed by TMs 1-5 and 6-10. These two domains form a lateral gate at the front which open onto the bilayer between TMs 2 and 7, and are clamped together by SecE at the back. The channel is closed by both a pore ring composed of hydrophobic SecY resides and a short helix (helix 2A) on the extracellular side of the membrane which forms a plug. The plug probably moves laterally to allow the channel to open. The ring and the pore may move independently. This is Protein translocase subunit SecY from Chlamydia trachomatis serovar D (strain ATCC VR-885 / DSM 19411 / UW-3/Cx).